A 185-amino-acid chain; its full sequence is Ribosome-recycling factor (185 aa).

It belongs to the RRF family.

It is found in the cytoplasm. Functionally, responsible for the release of ribosomes from messenger RNA at the termination of protein biosynthesis. May increase the efficiency of translation by recycling ribosomes from one round of translation to another. This is Ribosome-recycling factor from Lactococcus lactis subsp. lactis (strain IL1403) (Streptococcus lactis).